A 121-amino-acid chain; its full sequence is Small ribosomal subunit protein uS13 (121 aa).

Positions 94 to 121 (GLPLRGQRTRTNARTRKGPRRAAQSLKK) are disordered.

The protein belongs to the universal ribosomal protein uS13 family. As to quaternary structure, part of the 30S ribosomal subunit. Forms a loose heterodimer with protein S19. Forms two bridges to the 50S subunit in the 70S ribosome.

Its function is as follows. Located at the top of the head of the 30S subunit, it contacts several helices of the 16S rRNA. In the 70S ribosome it contacts the 23S rRNA (bridge B1a) and protein L5 of the 50S subunit (bridge B1b), connecting the 2 subunits; these bridges are implicated in subunit movement. Contacts the tRNAs in the A and P-sites. In Paraburkholderia phymatum (strain DSM 17167 / CIP 108236 / LMG 21445 / STM815) (Burkholderia phymatum), this protein is Small ribosomal subunit protein uS13.